A 140-amino-acid polypeptide reads, in one-letter code: Probable NADH dehydrogenase [ubiquinone] iron-sulfur protein 6, mitochondrial (140 aa).

The protein belongs to the complex I NDUFS6 subunit family. In terms of assembly, complex I is composed of 45 different subunits. This is a component of the iron-sulfur (IP) fragment of the enzyme.

It is found in the mitochondrion inner membrane. Functionally, accessory subunit of the mitochondrial membrane respiratory chain NADH dehydrogenase (Complex I), that is believed not to be involved in catalysis. Complex I functions in the transfer of electrons from NADH to the respiratory chain. The immediate electron acceptor for the enzyme is believed to be ubiquinone. The polypeptide is Probable NADH dehydrogenase [ubiquinone] iron-sulfur protein 6, mitochondrial (nduf-6) (Caenorhabditis elegans).